Consider the following 183-residue polypeptide: Translation initiation factor IF-3 (183 aa).

The span at 1 to 13 (MKQPDRNQQQGAK) shows a compositional bias: polar residues. The interval 1–24 (MKQPDRNQQQGAKSNRPAINDEIR) is disordered.

Belongs to the IF-3 family. As to quaternary structure, monomer.

Its subcellular location is the cytoplasm. Its function is as follows. IF-3 binds to the 30S ribosomal subunit and shifts the equilibrium between 70S ribosomes and their 50S and 30S subunits in favor of the free subunits, thus enhancing the availability of 30S subunits on which protein synthesis initiation begins. The sequence is that of Translation initiation factor IF-3 from Acinetobacter baylyi (strain ATCC 33305 / BD413 / ADP1).